Reading from the N-terminus, the 132-residue chain is Small ribosomal subunit protein uS8 (132 aa).

It belongs to the universal ribosomal protein uS8 family. As to quaternary structure, part of the 30S ribosomal subunit. Contacts proteins S5 and S12.

One of the primary rRNA binding proteins, it binds directly to 16S rRNA central domain where it helps coordinate assembly of the platform of the 30S subunit. This Clostridium kluyveri (strain NBRC 12016) protein is Small ribosomal subunit protein uS8.